We begin with the raw amino-acid sequence, 87 residues long: Small ribosomal subunit protein bS20 (87 aa).

The protein belongs to the bacterial ribosomal protein bS20 family.

In terms of biological role, binds directly to 16S ribosomal RNA. In Corynebacterium urealyticum (strain ATCC 43042 / DSM 7109), this protein is Small ribosomal subunit protein bS20.